A 1017-amino-acid chain; its full sequence is Probable beta-galactosidase B (1017 aa).

A signal peptide spans 1 to 20; sequence MTRITKLCVLLLSSIGLLAA. N-linked (GlcNAc...) asparagine glycosylation occurs at Asn-23. Tyr-90 contacts substrate. Residue Asn-100 is glycosylated (N-linked (GlcNAc...) asparagine). Asn-135, Ala-136, and Glu-137 together coordinate substrate. N-linked (GlcNAc...) asparagine glycosylation is present at Asn-158. Residue Asn-195 participates in substrate binding. The active-site Proton donor is the Glu-196. N-linked (GlcNAc...) asparagine glycosylation is present at Asn-211. Tyr-265 lines the substrate pocket. A disulfide bond links Cys-271 and Cys-324. Glu-308 acts as the Nucleophile in catalysis. Residue Tyr-373 coordinates substrate. 11 N-linked (GlcNAc...) asparagine glycosylation sites follow: Asn-411, Asn-417, Asn-456, Asn-628, Asn-681, Asn-737, Asn-770, Asn-777, Asn-785, Asn-828, and Asn-829.

Belongs to the glycosyl hydrolase 35 family.

Its subcellular location is the secreted. The catalysed reaction is Hydrolysis of terminal non-reducing beta-D-galactose residues in beta-D-galactosides.. In terms of biological role, cleaves beta-linked terminal galactosyl residues from gangliosides, glycoproteins, and glycosaminoglycans. The protein is Probable beta-galactosidase B (lacB) of Aspergillus niger (strain ATCC MYA-4892 / CBS 513.88 / FGSC A1513).